The primary structure comprises 173 residues: Crossover junction endodeoxyribonuclease RuvC (173 aa).

Residues aspartate 8, glutamate 67, and aspartate 139 contribute to the active site. Positions 8, 67, and 139 each coordinate Mg(2+).

This sequence belongs to the RuvC family. As to quaternary structure, homodimer which binds Holliday junction (HJ) DNA. The HJ becomes 2-fold symmetrical on binding to RuvC with unstacked arms; it has a different conformation from HJ DNA in complex with RuvA. In the full resolvosome a probable DNA-RuvA(4)-RuvB(12)-RuvC(2) complex forms which resolves the HJ. It depends on Mg(2+) as a cofactor.

The protein resides in the cytoplasm. It catalyses the reaction Endonucleolytic cleavage at a junction such as a reciprocal single-stranded crossover between two homologous DNA duplexes (Holliday junction).. Its function is as follows. The RuvA-RuvB-RuvC complex processes Holliday junction (HJ) DNA during genetic recombination and DNA repair. Endonuclease that resolves HJ intermediates. Cleaves cruciform DNA by making single-stranded nicks across the HJ at symmetrical positions within the homologous arms, yielding a 5'-phosphate and a 3'-hydroxyl group; requires a central core of homology in the junction. The consensus cleavage sequence is 5'-(A/T)TT(C/G)-3'. Cleavage occurs on the 3'-side of the TT dinucleotide at the point of strand exchange. HJ branch migration catalyzed by RuvA-RuvB allows RuvC to scan DNA until it finds its consensus sequence, where it cleaves and resolves the cruciform DNA. This Shewanella baltica (strain OS223) protein is Crossover junction endodeoxyribonuclease RuvC.